The sequence spans 252 residues: MSSSQPHRVLREIISTKQNEIKKISAWDPLPHRGLSLRDSLKSRTFSIIAECKRKSPSAGELRADYRPVQIAKTYEELGASAISVLTDQNYFGGSLEDLKDVSSELKIPVLRKDFILDEIQIREARAFGASAILLIVRILTPEQIKSFLKLASSLGMDCLVEVHTSDEAKLALDCGAEIIGINTRDLDTFQIHQNLVEEVSAFLPPNIVKVGESGIKKRSDLDTFRKLVDAALIGTYFMEKQDIRKAWLNLF.

Belongs to the TrpC family.

It carries out the reaction 1-(2-carboxyphenylamino)-1-deoxy-D-ribulose 5-phosphate + H(+) = (1S,2R)-1-C-(indol-3-yl)glycerol 3-phosphate + CO2 + H2O. The protein operates within amino-acid biosynthesis; L-tryptophan biosynthesis; L-tryptophan from chorismate: step 4/5. The chain is Indole-3-glycerol phosphate synthase from Leptospira interrogans serogroup Icterohaemorrhagiae serovar copenhageni (strain Fiocruz L1-130).